Reading from the N-terminus, the 289-residue chain is Phytoene synthase (289 aa).

This sequence belongs to the phytoene/squalene synthase family. The cofactor is ATP. Mn(2+) is required as a cofactor. It depends on Mg(2+) as a cofactor.

It participates in carotenoid biosynthesis; phytoene biosynthesis. Functionally, involved in the biosynthesis of carotenoids. Catalyzes the condensation of two molecules of geranylgeranyl diphosphate (GGPP) to give prephytoene diphosphate (PPPP) and the subsequent rearrangement of the cyclopropylcarbinyl intermediate to yield phytoene. This Thermus thermophilus (strain ATCC BAA-163 / DSM 7039 / HB27) protein is Phytoene synthase (crtB).